Here is a 465-residue protein sequence, read N- to C-terminus: Hepatocyte nuclear factor 6 (465 aa).

Disordered regions lie at residues 15–84 (GVSH…GPLH) and 119–141 (SDKF…HQRL). Residues 123 to 140 (PHHHHHHHHHHHPHHHQR) are compositionally biased toward basic residues. A DNA-binding region (CUT) is located at residues 283–369 (GSNSGQMEEI…QRMSALRLAA (87 aa)). The homeobox DNA-binding region spans 385-444 (PKKPRLVFTDVQRRTLHAIFKENKRPSKELQITISQQLGLELSTVSNFFMNARRRSLDKW). The tract at residues 443–465 (KWQDEGGSNSGSSSSSSSTCTKA) is disordered. A compositionally biased stretch (low complexity) spans 448-465 (GGSNSGSSSSSSSTCTKA).

It belongs to the CUT homeobox family. Binds DNA as a monomer.

Its subcellular location is the nucleus. Transcriptional activator. Binds the consensus sequence 5'-DHWATTGAYTWWD-3' on a variety of gene promoters such as those of HNF3B and TTR. Important for liver genes transcription. Stimulates the expression of Onecut3 in the developing endoderm. The sequence is that of Hepatocyte nuclear factor 6 (Onecut1) from Mus musculus (Mouse).